The primary structure comprises 244 residues: Triosephosphate isomerase (244 aa).

9–11 contacts substrate; it reads NWK. Catalysis depends on histidine 93, which acts as the Electrophile. Glutamate 160 acts as the Proton acceptor in catalysis. Glycine 166 and serine 206 together coordinate substrate.

The protein belongs to the triosephosphate isomerase family. Homodimer.

It localises to the cytoplasm. It catalyses the reaction D-glyceraldehyde 3-phosphate = dihydroxyacetone phosphate. It functions in the pathway carbohydrate biosynthesis; gluconeogenesis. Its pathway is carbohydrate degradation; glycolysis; D-glyceraldehyde 3-phosphate from glycerone phosphate: step 1/1. Its function is as follows. Involved in the gluconeogenesis. Catalyzes stereospecifically the conversion of dihydroxyacetone phosphate (DHAP) to D-glyceraldehyde-3-phosphate (G3P). This Mycoplasma genitalium (strain ATCC 33530 / DSM 19775 / NCTC 10195 / G37) (Mycoplasmoides genitalium) protein is Triosephosphate isomerase.